The chain runs to 412 residues: Gamma-glutamyl phosphate reductase (412 aa).

The protein belongs to the gamma-glutamyl phosphate reductase family.

Its subcellular location is the cytoplasm. It catalyses the reaction L-glutamate 5-semialdehyde + phosphate + NADP(+) = L-glutamyl 5-phosphate + NADPH + H(+). It participates in amino-acid biosynthesis; L-proline biosynthesis; L-glutamate 5-semialdehyde from L-glutamate: step 2/2. Its function is as follows. Catalyzes the NADPH-dependent reduction of L-glutamate 5-phosphate into L-glutamate 5-semialdehyde and phosphate. The product spontaneously undergoes cyclization to form 1-pyrroline-5-carboxylate. This Bartonella bacilliformis (strain ATCC 35685 / KC583 / Herrer 020/F12,63) protein is Gamma-glutamyl phosphate reductase.